Here is a 439-residue protein sequence, read N- to C-terminus: Probable threonine protease PRSS50 (439 aa).

2 disordered regions span residues 1 to 22 and 48 to 130; these read MEPWCGAEVRGQGPQGPRVPGA and ERIR…TMAP. Residues 1-47 form the signal peptide; that stretch reads MEPWCGAEVRGQGPQGPRVPGASRSRSRALLLLLLLLLLLLPRRPAG. Residues 9–21 show a composition bias toward low complexity; that stretch reads VRGQGPQGPRVPG. The Extracellular portion of the chain corresponds to 48 to 415; that stretch reads ERIRPRRPPR…WIWDRLSGEP (368 aa). A compositionally biased stretch (basic residues) spans 51–61; sequence RPRRPPRHAHP. Over residues 112–127 the composition is skewed to low complexity; the sequence is QAQTNQTTTAPPNSQT. 2 N-linked (GlcNAc...) asparagine glycosylation sites follow: Asn116 and Asn187. One can recognise a Peptidase S1 domain in the interval 157–412; it reads FCGSSHEPDP…YRPWIWDRLS (256 aa). A disulfide bridge links Cys192 with Cys208. His207 serves as the catalytic Charge relay system. Asn226 carries an N-linked (GlcNAc...) asparagine glycan. Asp260 acts as the Charge relay system in catalysis. Intrachain disulfides connect Cys294/Cys370, Cys327/Cys350, and Cys360/Cys388. Residue Thr364 is the Charge relay system of the active site. The chain crosses the membrane as a helical span at residues 416–436; it reads LALPAPSRTLLLAFLLLLILL. The Cytoplasmic segment spans residues 437–439; that stretch reads GTL.

It belongs to the peptidase S1 family.

Its subcellular location is the membrane. Its function is as follows. May be involved in proteolysis through its threonine endopeptidase activity. The polypeptide is Probable threonine protease PRSS50 (Prss50) (Mus musculus (Mouse)).